Consider the following 302-residue polypeptide: Deoxyhypusine hydroxylase (302 aa).

HEAT-like PBS-type repeat units lie at residues glutamate 23–aspartate 49, leucine 54–aspartate 80, valine 87–aspartate 113, aspartate 175–aspartate 201, phenylalanine 206–aspartate 232, and valine 239–aspartate 265. Positions 56, 57, 89, and 90 each coordinate Fe cation. Residues histidine 208, glutamate 209, histidine 241, and glutamate 242 each coordinate Fe cation.

The protein belongs to the deoxyhypusine hydroxylase family. Fe(2+) is required as a cofactor.

Its subcellular location is the endoplasmic reticulum membrane. It catalyses the reaction [eIF5A protein]-deoxyhypusine + AH2 + O2 = [eIF5A protein]-hypusine + A + H2O. It participates in protein modification; eIF5A hypusination. Its function is as follows. Catalyzes the hydroxylation of the N(6)-(4-aminobutyl)-L-lysine intermediate to form hypusine, an essential post-translational modification only found in mature eIF-5A factor. Essential for organismal viability and plays a role in a wide number of important processes such as cell growth and proliferation, and regulates induction of autophagy and protein synthesis. Has a role in eIF-5A-mediated translational control. In Drosophila pseudoobscura pseudoobscura (Fruit fly), this protein is Deoxyhypusine hydroxylase.